A 322-amino-acid polypeptide reads, in one-letter code: Tubulin alpha-4 chain (322 aa).

GTP-binding residues include Ser15, Gly19, Thr20, Thr54, Asn81, and Asn103. Glu129 is a catalytic residue.

Belongs to the tubulin family. As to quaternary structure, dimer of alpha and beta chains. A typical microtubule is a hollow water-filled tube with an outer diameter of 25 nm and an inner diameter of 15 nM. Alpha-beta heterodimers associate head-to-tail to form protofilaments running lengthwise along the microtubule wall with the beta-tubulin subunit facing the microtubule plus end conferring a structural polarity. Microtubules usually have 13 protofilaments but different protofilament numbers can be found in some organisms and specialized cells. It depends on Mg(2+) as a cofactor. In terms of processing, some glutamate residues at the C-terminus are polyglycylated, resulting in polyglycine chains on the gamma-carboxyl group. Glycylation is mainly limited to tubulin incorporated into axonemes (cilia and flagella) whereas glutamylation is prevalent in neuronal cells, centrioles, axonemes, and the mitotic spindle. Both modifications can coexist on the same protein on adjacent residues, and lowering polyglycylation levels increases polyglutamylation, and reciprocally. The precise function of polyglycylation is still unclear. Post-translationally, some glutamate residues at the C-terminus are polyglutamylated, resulting in polyglutamate chains on the gamma-carboxyl group. Polyglutamylation plays a key role in microtubule severing by spastin (SPAST). SPAST preferentially recognizes and acts on microtubules decorated with short polyglutamate tails: severing activity by SPAST increases as the number of glutamates per tubulin rises from one to eight, but decreases beyond this glutamylation threshold.

It is found in the cytoplasm. The protein resides in the cytoskeleton. It carries out the reaction GTP + H2O = GDP + phosphate + H(+). In terms of biological role, tubulin is the major constituent of microtubules, a cylinder consisting of laterally associated linear protofilaments composed of alpha- and beta-tubulin heterodimers. Microtubules grow by the addition of GTP-tubulin dimers to the microtubule end, where a stabilizing cap forms. Below the cap, tubulin dimers are in GDP-bound state, owing to GTPase activity of alpha-tubulin. This chain is Tubulin alpha-4 chain, found in Gallus gallus (Chicken).